We begin with the raw amino-acid sequence, 62 residues long: Small ribosomal subunit protein bS21 (62 aa).

Over residues 43–52 (VKKKLKSEAA) the composition is skewed to basic and acidic residues. Residues 43–62 (VKKKLKSEAARKRKAKKKRF) are disordered. Positions 53–62 (RKRKAKKKRF) are enriched in basic residues.

It belongs to the bacterial ribosomal protein bS21 family.

In Levilactobacillus brevis (strain ATCC 367 / BCRC 12310 / CIP 105137 / JCM 1170 / LMG 11437 / NCIMB 947 / NCTC 947) (Lactobacillus brevis), this protein is Small ribosomal subunit protein bS21.